The primary structure comprises 1857 residues: U3 small nucleolar RNA-associated protein 10 (1857 aa).

A helical transmembrane segment spans residues 267–287; sequence LTAYSIISVLSSLVPLSADLV. The stretch at 1817-1855 is one HEAT repeat; the sequence is LIPYIAELLEDDDEEVELEVRNGLVRVIENVLGEPLDRY.

It belongs to the HEATR1/UTP10 family. As to quaternary structure, component of the ribosomal small subunit (SSU) processome.

The protein resides in the nucleus. It localises to the nucleolus. The protein localises to the membrane. Its function is as follows. Involved in nucleolar processing of pre-18S ribosomal RNA. Involved in ribosome biosynthesis. This Debaryomyces hansenii (strain ATCC 36239 / CBS 767 / BCRC 21394 / JCM 1990 / NBRC 0083 / IGC 2968) (Yeast) protein is U3 small nucleolar RNA-associated protein 10.